The primary structure comprises 149 residues: Protein-export protein SecB (149 aa).

It belongs to the SecB family. As to quaternary structure, homotetramer, a dimer of dimers. One homotetramer interacts with 1 SecA dimer.

It is found in the cytoplasm. Its function is as follows. One of the proteins required for the normal export of preproteins out of the cell cytoplasm. It is a molecular chaperone that binds to a subset of precursor proteins, maintaining them in a translocation-competent state. It also specifically binds to its receptor SecA. This Acidithiobacillus ferrooxidans (strain ATCC 23270 / DSM 14882 / CIP 104768 / NCIMB 8455) (Ferrobacillus ferrooxidans (strain ATCC 23270)) protein is Protein-export protein SecB.